Consider the following 172-residue polypeptide: Large ribosomal subunit protein uL10 (172 aa).

The protein belongs to the universal ribosomal protein uL10 family. Part of the ribosomal stalk of the 50S ribosomal subunit. The N-terminus interacts with L11 and the large rRNA to form the base of the stalk. The C-terminus forms an elongated spine to which L12 dimers bind in a sequential fashion forming a multimeric L10(L12)X complex.

In terms of biological role, forms part of the ribosomal stalk, playing a central role in the interaction of the ribosome with GTP-bound translation factors. This chain is Large ribosomal subunit protein uL10, found in Idiomarina loihiensis (strain ATCC BAA-735 / DSM 15497 / L2-TR).